The sequence spans 261 residues: Cytochrome c oxidase subunit 3 (261 aa).

Topologically, residues 1 to 15 (MTHQTHAYHMVNPSP) are mitochondrial matrix. The chain crosses the membrane as a helical span at residues 16-34 (WPLTGALSALLMTSGLTMW). The Mitochondrial intermembrane portion of the chain corresponds to 35–40 (FHFNSM). A helical transmembrane segment spans residues 41 to 66 (TLLTLGLTTNMLTMYQWWRDIIREST). The Mitochondrial matrix segment spans residues 67–72 (FQGHHT). Residues 73–105 (PNVQKGLRYGMILFIISEVLFFTGFFWAFYHSS) traverse the membrane as a helical segment. At 106 to 128 (LAPTPELGGCWPPTGIHPLNPLE) the chain is on the mitochondrial intermembrane side. The helical transmembrane segment at 129 to 152 (VPLLNTSVLLASGVSITWAHHSLM) threads the bilayer. At 153 to 155 (EGN) the chain is on the mitochondrial matrix side. Residues 156–183 (RNHMLQALFITISLGVYFTLLQASEYYE) form a helical membrane-spanning segment. Residues 184-190 (APFTISD) are Mitochondrial intermembrane-facing. Residues 191-223 (GVYGSTFFVATGFHGLHVIIGSTFLIVCFFRQL) traverse the membrane as a helical segment. The Mitochondrial matrix segment spans residues 224–232 (KFHFTSNHH). A helical transmembrane segment spans residues 233–256 (FGFEAAAWYWHFVDVVWLFLYVSI). Residues 257-261 (YWWGS) are Mitochondrial intermembrane-facing.

It belongs to the cytochrome c oxidase subunit 3 family. Component of the cytochrome c oxidase (complex IV, CIV), a multisubunit enzyme composed of 14 subunits. The complex is composed of a catalytic core of 3 subunits MT-CO1, MT-CO2 and MT-CO3, encoded in the mitochondrial DNA, and 11 supernumerary subunits COX4I, COX5A, COX5B, COX6A, COX6B, COX6C, COX7A, COX7B, COX7C, COX8 and NDUFA4, which are encoded in the nuclear genome. The complex exists as a monomer or a dimer and forms supercomplexes (SCs) in the inner mitochondrial membrane with NADH-ubiquinone oxidoreductase (complex I, CI) and ubiquinol-cytochrome c oxidoreductase (cytochrome b-c1 complex, complex III, CIII), resulting in different assemblies (supercomplex SCI(1)III(2)IV(1) and megacomplex MCI(2)III(2)IV(2)).

The protein localises to the mitochondrion inner membrane. It carries out the reaction 4 Fe(II)-[cytochrome c] + O2 + 8 H(+)(in) = 4 Fe(III)-[cytochrome c] + 2 H2O + 4 H(+)(out). In terms of biological role, component of the cytochrome c oxidase, the last enzyme in the mitochondrial electron transport chain which drives oxidative phosphorylation. The respiratory chain contains 3 multisubunit complexes succinate dehydrogenase (complex II, CII), ubiquinol-cytochrome c oxidoreductase (cytochrome b-c1 complex, complex III, CIII) and cytochrome c oxidase (complex IV, CIV), that cooperate to transfer electrons derived from NADH and succinate to molecular oxygen, creating an electrochemical gradient over the inner membrane that drives transmembrane transport and the ATP synthase. Cytochrome c oxidase is the component of the respiratory chain that catalyzes the reduction of oxygen to water. Electrons originating from reduced cytochrome c in the intermembrane space (IMS) are transferred via the dinuclear copper A center (CU(A)) of subunit 2 and heme A of subunit 1 to the active site in subunit 1, a binuclear center (BNC) formed by heme A3 and copper B (CU(B)). The BNC reduces molecular oxygen to 2 water molecules using 4 electrons from cytochrome c in the IMS and 4 protons from the mitochondrial matrix. The polypeptide is Cytochrome c oxidase subunit 3 (MT-CO3) (Antidorcas marsupialis (Springbok)).